A 428-amino-acid polypeptide reads, in one-letter code: Serine--tRNA ligase (428 aa).

Position 231-233 (231-233) interacts with L-serine; that stretch reads TAE. An ATP-binding site is contributed by 262–264; the sequence is RSE. Glutamate 285 contacts L-serine. 349 to 352 is an ATP binding site; sequence EISS. Residue serine 385 coordinates L-serine.

Belongs to the class-II aminoacyl-tRNA synthetase family. Type-1 seryl-tRNA synthetase subfamily. In terms of assembly, homodimer. The tRNA molecule binds across the dimer.

It is found in the cytoplasm. It catalyses the reaction tRNA(Ser) + L-serine + ATP = L-seryl-tRNA(Ser) + AMP + diphosphate + H(+). It carries out the reaction tRNA(Sec) + L-serine + ATP = L-seryl-tRNA(Sec) + AMP + diphosphate + H(+). Its pathway is aminoacyl-tRNA biosynthesis; selenocysteinyl-tRNA(Sec) biosynthesis; L-seryl-tRNA(Sec) from L-serine and tRNA(Sec): step 1/1. In terms of biological role, catalyzes the attachment of serine to tRNA(Ser). Is also able to aminoacylate tRNA(Sec) with serine, to form the misacylated tRNA L-seryl-tRNA(Sec), which will be further converted into selenocysteinyl-tRNA(Sec). The protein is Serine--tRNA ligase of Staphylococcus aureus (strain MSSA476).